We begin with the raw amino-acid sequence, 112 residues long: MSDLEAEPTFEEKFGYVPRGHTCNGAFNMFERPKEPRKPKKAKQTGSLCTKCGTRKKRGLCKLCDRCPKCNFPKITTTYQIKSFGMIKDKKQIVCPNACKITDDFYFGNWMA.

This is an uncharacterized protein from Acanthamoeba polyphaga mimivirus (APMV).